Reading from the N-terminus, the 479-residue chain is Transcriptional regulator ERG (479 aa).

Positions 34 to 47 (TASSSSDYGQTSKM) are enriched in polar residues. 2 disordered regions span residues 34–56 (TASS…QQDW) and 72–92 (PSQV…KGGK). Residues Ser48, Ser81, and Ser96 each carry the phosphoserine modification. The PNT domain maps to 113–199 (MPPPNMTTNE…SHLHYLRETP (87 aa)). A disordered region spans residues 242–293 (QRITTRPDLPYEPPRRSAWTGHGHPTPQSKAAQPSPSTVPKTEDQRPQLDPY). Over residues 267–281 (TPQSKAAQPSPSTVP) the composition is skewed to polar residues. Lys282 is covalently cross-linked (Glycyl lysine isopeptide (Lys-Gly) (interchain with G-Cter in SUMO2)). A DNA-binding region (ETS) is located at residues 311 to 391 (IQLWQFLLEL…HGKRYAYKFD (81 aa)).

The protein belongs to the ETS family. Identified in a IGF2BP1-dependent mRNP granule complex containing untranslated mRNAs. Interacts with SETDB1.

Its subcellular location is the nucleus. The protein localises to the cytoplasm. Transcriptional regulator. May participate in transcriptional regulation through the recruitment of SETDB1 histone methyltransferase and subsequent modification of local chromatin structure. The sequence is that of Transcriptional regulator ERG (ERG) from Homo sapiens (Human).